The following is a 572-amino-acid chain: Excitatory amino acid transporter 2 (572 aa).

A compositionally biased stretch (polar residues) spans 1-11; sequence MASTEGANNMP. The disordered stretch occupies residues 1–28; the sequence is MASTEGANNMPKQVEVRMHDSHLSSDEP. The Cytoplasmic portion of the chain corresponds to 1–44; that stretch reads MASTEGANNMPKQVEVRMHDSHLSSDEPKHRNLGMRMCDKLGKN. Residues serine 3, serine 21, serine 24, and serine 25 each carry the phosphoserine modification. A compositionally biased stretch (basic and acidic residues) spans 14 to 28; sequence VEVRMHDSHLSSDEP. A lipid anchor (S-palmitoyl cysteine) is attached at cysteine 38. Helical transmembrane passes span 45–64, 88–108, and 121–142; these read LLLSLTVFGVILGAVCGGLL, MLKMLILPLIISSLITGLSGL, and MVYYMSTTIIAAVLGVILVLAI. 2 N-linked (GlcNAc...) asparagine glycosylation sites follow: asparagine 205 and asparagine 215. 3 helical membrane passes run 235–258, 268–295, and 317–338; these read FKDGMNVLGLIGFFIAFGIAMGKM, FFNILNEIVMKLVIMIMWYSPLGIACLI, and ITVIVGLIIHGGIFLPLIYFVV. Residues 344-374 constitute an intramembrane region (discontinuously helical); the sequence is FSFFAGIFQAWITALGTASSAGTLPVTFRCL. 361–363 serves as a coordination point for L-aspartate; the sequence is ASS. The chain crosses the membrane as a helical span at residues 384-410; that stretch reads VTRFVLPVGATINMDGTALYEAVAAIF. The Na(+) site is built by glycine 392, threonine 394, and asparagine 396. Residues threonine 400, 441–445, aspartate 474, and asparagine 481 contribute to the L-aspartate site; that span reads IPSAG. An intramembrane region (discontinuously helical) is located at residues 424 to 457; it reads IVTVSLTATLASIGAASIPSAGLVTMLLILTAVG. A helical transmembrane segment spans residues 471–492; it reads WLLDRMRTSVNVVGDSFGAGIV. The Na(+) site is built by asparagine 481 and aspartate 485. Phosphoserine occurs at positions 505, 520, 530, and 532. At tyrosine 537 the chain carries Phosphotyrosine. 3 positions are modified to phosphoserine: serine 542, serine 558, and serine 562.

The protein belongs to the dicarboxylate/amino acid:cation symporter (DAACS) (TC 2.A.23) family. SLC1A2 subfamily. In terms of assembly, homotrimer. Interacts with AJUBA. Post-translationally, glycosylated. In terms of processing, palmitoylation at Cys-38 is not required for correct subcellular localization, but is important for glutamate uptake activity. Detected in brain. Detected in embryonic forebrain, especially in globus pallidus, perirhinal cortex, lateral hypothalamus, hippocampus, and on fimbria and axonal pathways connecting the neocortex, basal ganglia and thalamus (at protein level). Isoform GLT1 is expressed in the brain. Isoforms GLT-1A and GLT-1B are expressed in the liver.

The protein localises to the cell membrane. The enzyme catalyses K(+)(in) + L-glutamate(out) + 3 Na(+)(out) + H(+)(out) = K(+)(out) + L-glutamate(in) + 3 Na(+)(in) + H(+)(in). It catalyses the reaction K(+)(in) + L-aspartate(out) + 3 Na(+)(out) + H(+)(out) = K(+)(out) + L-aspartate(in) + 3 Na(+)(in) + H(+)(in). The catalysed reaction is D-aspartate(out) + K(+)(in) + 3 Na(+)(out) + H(+)(out) = D-aspartate(in) + K(+)(out) + 3 Na(+)(in) + H(+)(in). Sodium-dependent, high-affinity amino acid transporter that mediates the uptake of L-glutamate and also L-aspartate and D-aspartate. Functions as a symporter that transports one amino acid molecule together with two or three Na(+) ions and one proton, in parallel with the counter-transport of one K(+) ion. Mediates Cl(-) flux that is not coupled to amino acid transport; this avoids the accumulation of negative charges due to aspartate and Na(+) symport. Essential for the rapid removal of released glutamate from the synaptic cleft, and for terminating the postsynaptic action of glutamate. The chain is Excitatory amino acid transporter 2 (Slc1a2) from Mus musculus (Mouse).